The chain runs to 532 residues: 56 kDa type-specific antigen (532 aa).

Residues 1–22 form the signal peptide; it reads MKKIMLIASAMSALSLPFSASA. A helical transmembrane segment spans residues 67-87; sequence LTTGLPFGGTLAAGMTIAPGF. Disordered regions lie at residues 113–140 and 400–426; these read KGEI…PQPT and QQEE…SKEG. Residues 403 to 413 are compositionally biased toward basic and acidic residues; sequence EDAKNQGKGDC. The chain crosses the membrane as a helical span at residues 480–500; sequence TGMVASGALGVAINAAEGVCV.

The protein resides in the cell membrane. May be an adherent factor for rickettsial adsorption to the host-cell surface and a determinant of virulence of individual rickettsial strain. It is the major outer membrane protein. The chain is 56 kDa type-specific antigen from Orientia tsutsugamushi (Rickettsia tsutsugamushi).